The following is a 311-amino-acid chain: MERPTGVYFQTMTMKQIRERLKQCDLIIIPVGSTENHGPNAPTGEDTFLVTRMAEQVALKTGCTVAEPIWYGYHPYHHIGMPGTVPVKDEAFIDYLVSVIAGFWNTGFRKQILLNGHGQEFVIPIAIHKFAKIFQVPAIIINLNWYHAIQDKFKTKEEGGPYETPFIHADEVETSWSLALFPEFMHQEWAVDTEPKGFLPEGHIDKAGNLLHRPIAWYGHVGGGPIEVVAYPEGVVGKATLASAEKAKEGVEALLDYLEKLVRDIMERFPAGKLPPAEMLSQRPKEELEALTKEPLTEGWRNLYTAGNLWG.

Glutamate 35, histidine 37, aspartate 46, histidine 117, and glutamate 173 together coordinate Zn(2+).

Belongs to the creatininase superfamily. Homotrimer. The cofactor is Zn(2+).

The enzyme catalyses 3-dehydro-scyllo-inosose + H2O = 5-dehydro-L-gluconate + H(+). It participates in polyol metabolism; myo-inositol metabolism. Functionally, catalyzes the ring-opening hydrolysis of 3-dehydro-scyllo-inosose (diketo-inositol) to 5-dehydro-L-gluconate, and thus probably functions in a myo-inositol degradation pathway together with IolG, IolM and IolO. The protein is 3-dehydro-scyllo-inosose hydrolase of Thermotoga maritima (strain ATCC 43589 / DSM 3109 / JCM 10099 / NBRC 100826 / MSB8).